A 153-amino-acid chain; its full sequence is ORM1-like protein 1 (153 aa).

Over 1 to 27 (MNVGVAHSEVNPNTRVMNSRGIWLTYA) the chain is Cytoplasmic. Transmembrane regions (helical) follow at residues 28-46 (LGVGMLHIVLLSIPFFSVP) and 47-64 (VVWTLTNVIHNFGMYVFM). Residues 65-105 (HAVKGTPFETPDQGKARLLTHWEQLDYGVQFTSSRKFFTIS) are Cytoplasmic-facing. The next 2 membrane-spanning stretches (helical) occupy residues 106 to 123 (PIILYFLASFYTKYDTAH) and 124 to 140 (FVINTASLLSVLIPKLP). Over 141–153 (QLHGVRIFGINKY) the chain is Cytoplasmic.

This sequence belongs to the ORM family. As to quaternary structure, ceramide-sensitive subunit of the serine palmitoyltransferase (SPT) complex, which is also composed of SPTLC1, SPTLC2/3 and SPTSSA/B.

The protein localises to the endoplasmic reticulum membrane. Functionally, plays an essential role in the homeostatic regulation of sphingolipid de novo biosynthesis by modulating the activity of the serine palmitoyltransferase (SPT) in response to ceramide levels. When complexed to SPT, the binding of ceramides to its N-terminus stabilizes a conformation that block SPT substrate entry, hence preventing SPT catalytic activity. Through this mechanism, maintains ceramide levels at sufficient concentrations for the production of complex sphingolipids, but which prevents the accumulation of ceramides to levels that trigger apoptosis. This Danio rerio (Zebrafish) protein is ORM1-like protein 1 (ormdl1).